Here is a 152-residue protein sequence, read N- to C-terminus: MTETTPEVEVAVEAEVTYSESFVFERPIQTVGRRKEAVVRVRLVPGSGKFDLNGRSLEAYFPNKVHQQLIKAPLVTVDRLESYDIFALLHGGGPSGQAGALRLGIARALIVANPEDRPALKKACFLTRDPRATERKKYGLKKARKAPQYSKR.

It belongs to the universal ribosomal protein uS9 family.

This is Small ribosomal subunit protein uS9 from Mycobacterium ulcerans (strain Agy99).